We begin with the raw amino-acid sequence, 344 residues long: UDP-3-O-acylglucosamine N-acyltransferase (344 aa).

Residue His248 is the Proton acceptor of the active site.

It belongs to the transferase hexapeptide repeat family. LpxD subfamily. Homotrimer.

The enzyme catalyses a UDP-3-O-[(3R)-3-hydroxyacyl]-alpha-D-glucosamine + a (3R)-hydroxyacyl-[ACP] = a UDP-2-N,3-O-bis[(3R)-3-hydroxyacyl]-alpha-D-glucosamine + holo-[ACP] + H(+). It functions in the pathway bacterial outer membrane biogenesis; LPS lipid A biosynthesis. Its function is as follows. Catalyzes the N-acylation of UDP-3-O-acylglucosamine using 3-hydroxyacyl-ACP as the acyl donor. Is involved in the biosynthesis of lipid A, a phosphorylated glycolipid that anchors the lipopolysaccharide to the outer membrane of the cell. The protein is UDP-3-O-acylglucosamine N-acyltransferase of Prochlorococcus marinus (strain MIT 9312).